Consider the following 206-residue polypeptide: Small ribosomal subunit protein eS1 (206 aa).

It belongs to the eukaryotic ribosomal protein eS1 family.

This Natronomonas pharaonis (strain ATCC 35678 / DSM 2160 / CIP 103997 / JCM 8858 / NBRC 14720 / NCIMB 2260 / Gabara) (Halobacterium pharaonis) protein is Small ribosomal subunit protein eS1.